Reading from the N-terminus, the 303-residue chain is UPF0282 protein MM_2966 (303 aa).

The protein belongs to the UPF0282 family.

In Methanosarcina mazei (strain ATCC BAA-159 / DSM 3647 / Goe1 / Go1 / JCM 11833 / OCM 88) (Methanosarcina frisia), this protein is UPF0282 protein MM_2966.